The chain runs to 80 residues: Acyl carrier protein (80 aa).

Residues 1-79 form the Carrier domain; sequence MSQEEILQKV…DAVKFIEAKK (79 aa). At S39 the chain carries O-(pantetheine 4'-phosphoryl)serine.

Belongs to the acyl carrier protein (ACP) family. Post-translationally, 4'-phosphopantetheine is transferred from CoA to a specific serine of apo-ACP by AcpS. This modification is essential for activity because fatty acids are bound in thioester linkage to the sulfhydryl of the prosthetic group.

The protein localises to the cytoplasm. The protein operates within lipid metabolism; fatty acid biosynthesis. In terms of biological role, carrier of the growing fatty acid chain in fatty acid biosynthesis. The polypeptide is Acyl carrier protein (Prochlorococcus marinus (strain MIT 9515)).